We begin with the raw amino-acid sequence, 353 residues long: Guanine nucleotide-binding protein subunit alpha (353 aa).

The segment at 1 to 26 (MGCGMSTEEKEGKARNEEIENQLKRD) is disordered. Gly2 carries the N-myristoyl glycine lipid modification. Cys3 carries S-palmitoyl cysteine lipidation. The segment covering 7–26 (TEEKEGKARNEEIENQLKRD) has biased composition (basic and acidic residues). Residues 32–353 (NEIKMLLLGA…QENLRLCGLI (322 aa)) enclose the G-alpha domain. The G1 motif stretch occupies residues 35–48 (KMLLLGAGESGKST). Positions 43, 44, 45, 46, 47, 48, 150, 175, 181, 203, 269, 270, 272, and 325 each coordinate GTP. Ser47 serves as a coordination point for Mg(2+). The tract at residues 173–181 (DVLRSRVKT) is G2 motif. Residue Thr181 coordinates Mg(2+). A G3 motif region spans residues 196-205 (YRMFDVGGQR). The tract at residues 265 to 272 (ILFLNKID) is G4 motif. The interval 323–328 (TCATDT) is G5 motif.

Belongs to the G-alpha family. G(q) subfamily. As to quaternary structure, g proteins are composed of 3 units; alpha, beta and gamma. The alpha chain contains the guanine nucleotide binding site. Mg(2+) is required as a cofactor.

Its function is as follows. Guanine nucleotide-binding proteins (G proteins) are involved as modulators or transducers in various transmembrane signaling systems. The sequence is that of Guanine nucleotide-binding protein subunit alpha from Cryphonectria parasitica (Chestnut blight fungus).